The primary structure comprises 485 residues: Protein nucleotidyltransferase YdiU (485 aa).

ATP-binding residues include Gly90, Gly92, Arg93, Lys113, Asp125, Gly126, Arg176, and Arg183. Asp252 serves as the catalytic Proton acceptor. Residues Asn253 and Asp262 each coordinate Mg(2+). Asp262 contacts ATP.

It belongs to the SELO family. Requires Mg(2+) as cofactor. Mn(2+) is required as a cofactor.

It carries out the reaction L-seryl-[protein] + ATP = 3-O-(5'-adenylyl)-L-seryl-[protein] + diphosphate. The enzyme catalyses L-threonyl-[protein] + ATP = 3-O-(5'-adenylyl)-L-threonyl-[protein] + diphosphate. It catalyses the reaction L-tyrosyl-[protein] + ATP = O-(5'-adenylyl)-L-tyrosyl-[protein] + diphosphate. The catalysed reaction is L-histidyl-[protein] + UTP = N(tele)-(5'-uridylyl)-L-histidyl-[protein] + diphosphate. It carries out the reaction L-seryl-[protein] + UTP = O-(5'-uridylyl)-L-seryl-[protein] + diphosphate. The enzyme catalyses L-tyrosyl-[protein] + UTP = O-(5'-uridylyl)-L-tyrosyl-[protein] + diphosphate. In terms of biological role, nucleotidyltransferase involved in the post-translational modification of proteins. It can catalyze the addition of adenosine monophosphate (AMP) or uridine monophosphate (UMP) to a protein, resulting in modifications known as AMPylation and UMPylation. This Aliivibrio salmonicida (strain LFI1238) (Vibrio salmonicida (strain LFI1238)) protein is Protein nucleotidyltransferase YdiU.